A 111-amino-acid chain; its full sequence is MNAQALVLTDNAANKVRQLRDSEGNDDLMLRVYVTGGGCSGFSYGFNFAESINEDDAEFVNGDVKMLVDSLSYQYLVGSVVDYVEGLEGSRFIVQNPNATTTCGCGSSFSI.

3 residues coordinate iron-sulfur cluster: Cys39, Cys103, and Cys105.

Belongs to the HesB/IscA family. Homodimer. Iron-sulfur cluster is required as a cofactor.

Its function is as follows. Required for insertion of 4Fe-4S clusters for at least IspG. This Acinetobacter baumannii (strain SDF) protein is Iron-sulfur cluster insertion protein ErpA.